We begin with the raw amino-acid sequence, 277 residues long: uncharacterized protein (277 aa).

A disordered region spans residues 232-262; it reads NNESAICESQASSKEDERSDKTTSSSKKKSF. Polar residues predominate over residues 234-243; sequence ESAICESQAS.

It localises to the cytoplasm. The protein resides in the nucleus. This is an uncharacterized protein from Schizosaccharomyces pombe (strain 972 / ATCC 24843) (Fission yeast).